Here is a 453-residue protein sequence, read N- to C-terminus: Bifunctional protein GlmU (453 aa).

The pyrophosphorylase stretch occupies residues 1–231 (MERSSLAVIL…EKELTGCNNR (231 aa)). Residues 10 to 13 (LAAG), Lys-24, Gln-77, 82 to 83 (GT), 105 to 107 (YGD), Gly-143, Glu-157, Asn-172, and Asn-229 contribute to the UDP-N-acetyl-alpha-D-glucosamine site. Asp-107 contacts Mg(2+). Asn-229 contacts Mg(2+). The linker stretch occupies residues 232–252 (AELAFIERLWQERRRHELMVD). Residues 253–453 (GVSMIAPETV…AQKEAKKKSS (201 aa)) form an N-acetyltransferase region. Residues Arg-318 and Lys-336 each contribute to the UDP-N-acetyl-alpha-D-glucosamine site. The active-site Proton acceptor is His-348. UDP-N-acetyl-alpha-D-glucosamine-binding residues include Tyr-351 and Asn-362. Residues Ala-365, 371-372 (NY), Ser-390, Ser-408, and Arg-425 each bind acetyl-CoA.

The protein in the N-terminal section; belongs to the N-acetylglucosamine-1-phosphate uridyltransferase family. This sequence in the C-terminal section; belongs to the transferase hexapeptide repeat family. In terms of assembly, homotrimer. The cofactor is Mg(2+).

It localises to the cytoplasm. It catalyses the reaction alpha-D-glucosamine 1-phosphate + acetyl-CoA = N-acetyl-alpha-D-glucosamine 1-phosphate + CoA + H(+). The catalysed reaction is N-acetyl-alpha-D-glucosamine 1-phosphate + UTP + H(+) = UDP-N-acetyl-alpha-D-glucosamine + diphosphate. It participates in nucleotide-sugar biosynthesis; UDP-N-acetyl-alpha-D-glucosamine biosynthesis; N-acetyl-alpha-D-glucosamine 1-phosphate from alpha-D-glucosamine 6-phosphate (route II): step 2/2. Its pathway is nucleotide-sugar biosynthesis; UDP-N-acetyl-alpha-D-glucosamine biosynthesis; UDP-N-acetyl-alpha-D-glucosamine from N-acetyl-alpha-D-glucosamine 1-phosphate: step 1/1. It functions in the pathway bacterial outer membrane biogenesis; LPS lipid A biosynthesis. Functionally, catalyzes the last two sequential reactions in the de novo biosynthetic pathway for UDP-N-acetylglucosamine (UDP-GlcNAc). The C-terminal domain catalyzes the transfer of acetyl group from acetyl coenzyme A to glucosamine-1-phosphate (GlcN-1-P) to produce N-acetylglucosamine-1-phosphate (GlcNAc-1-P), which is converted into UDP-GlcNAc by the transfer of uridine 5-monophosphate (from uridine 5-triphosphate), a reaction catalyzed by the N-terminal domain. The protein is Bifunctional protein GlmU of Agrobacterium fabrum (strain C58 / ATCC 33970) (Agrobacterium tumefaciens (strain C58)).